A 107-amino-acid chain; its full sequence is Thiosulfate sulfurtransferase GlpE (107 aa).

The 89-residue stretch at 19-107 (QDLNAVLVDI…WHKAGLPVEK (89 aa)) folds into the Rhodanese domain. Residue cysteine 67 is the Cysteine persulfide intermediate of the active site.

It belongs to the GlpE family.

It localises to the cytoplasm. It catalyses the reaction thiosulfate + hydrogen cyanide = thiocyanate + sulfite + 2 H(+). The catalysed reaction is thiosulfate + [thioredoxin]-dithiol = [thioredoxin]-disulfide + hydrogen sulfide + sulfite + 2 H(+). Its function is as follows. Transferase that catalyzes the transfer of sulfur from thiosulfate to thiophilic acceptors such as cyanide or dithiols. May function in a CysM-independent thiosulfate assimilation pathway by catalyzing the conversion of thiosulfate to sulfite, which can then be used for L-cysteine biosynthesis. The chain is Thiosulfate sulfurtransferase GlpE from Aliivibrio fischeri (strain MJ11) (Vibrio fischeri).